A 396-amino-acid polypeptide reads, in one-letter code: CCA-adding enzyme (396 aa).

Positions 27 and 30 each coordinate ATP. Positions 27 and 30 each coordinate CTP. Mg(2+) contacts are provided by aspartate 40 and aspartate 42. ATP-binding residues include arginine 111, aspartate 154, arginine 157, arginine 160, and arginine 163. Residues arginine 111, aspartate 154, arginine 157, arginine 160, and arginine 163 each coordinate CTP.

It belongs to the tRNA nucleotidyltransferase/poly(A) polymerase family. Bacterial CCA-adding enzyme type 3 subfamily. As to quaternary structure, homodimer. Mg(2+) serves as cofactor.

The enzyme catalyses a tRNA precursor + 2 CTP + ATP = a tRNA with a 3' CCA end + 3 diphosphate. The catalysed reaction is a tRNA with a 3' CCA end + 2 CTP + ATP = a tRNA with a 3' CCACCA end + 3 diphosphate. Its function is as follows. Catalyzes the addition and repair of the essential 3'-terminal CCA sequence in tRNAs without using a nucleic acid template. Adds these three nucleotides in the order of C, C, and A to the tRNA nucleotide-73, using CTP and ATP as substrates and producing inorganic pyrophosphate. tRNA 3'-terminal CCA addition is required both for tRNA processing and repair. Also involved in tRNA surveillance by mediating tandem CCA addition to generate a CCACCA at the 3' terminus of unstable tRNAs. While stable tRNAs receive only 3'-terminal CCA, unstable tRNAs are marked with CCACCA and rapidly degraded. This is CCA-adding enzyme from Pediococcus pentosaceus (strain ATCC 25745 / CCUG 21536 / LMG 10740 / 183-1w).